Consider the following 505-residue polypeptide: ATP synthase subunit beta, mitochondrial (505 aa).

The transit peptide at 1–31 (MFALRAASKADKNLLPFLGQLSRSHAAKAAK) directs the protein to the mitochondrion. 183–190 (GGAGVGKT) serves as a coordination point for ATP.

This sequence belongs to the ATPase alpha/beta chains family. In terms of assembly, F-type ATPases have 2 components, CF(1) - the catalytic core - and CF(0) - the membrane proton channel. CF(1) has five subunits: alpha(3), beta(3), gamma(1), delta(1), epsilon(1). CF(0) has three main subunits: a, b and c.

It is found in the mitochondrion. The protein localises to the mitochondrion inner membrane. The catalysed reaction is ATP + H2O + 4 H(+)(in) = ADP + phosphate + 5 H(+)(out). Its function is as follows. Mitochondrial membrane ATP synthase (F(1)F(0) ATP synthase or Complex V) produces ATP from ADP in the presence of a proton gradient across the membrane which is generated by electron transport complexes of the respiratory chain. F-type ATPases consist of two structural domains, F(1) - containing the extramembraneous catalytic core, and F(0) - containing the membrane proton channel, linked together by a central stalk and a peripheral stalk. During catalysis, ATP synthesis in the catalytic domain of F(1) is coupled via a rotary mechanism of the central stalk subunits to proton translocation. Subunits alpha and beta form the catalytic core in F(1). Rotation of the central stalk against the surrounding alpha(3)beta(3) subunits leads to hydrolysis of ATP in three separate catalytic sites on the beta subunits. This chain is ATP synthase subunit beta, mitochondrial, found in Drosophila melanogaster (Fruit fly).